The chain runs to 208 residues: AN1-type zinc finger protein 6 (208 aa).

An A20-type zinc finger spans residues 8–42 (SQVPMLCSTGCGFYGNPRTNGMCSVCYKEHLQRQN). Zn(2+) is bound by residues C14, C18, C30, and C33. Residues 41 to 68 (QNSSNGRISPPATSVSSLSESLPVQCTD) show a composition bias toward polar residues. The disordered stretch occupies residues 41–140 (QNSSNGRISP…PSEEQSKSLE (100 aa)). The residue at position 49 (S49) is a Phosphoserine. The segment covering 80-94 (STSSSMQPSPVSNQS) has biased composition (low complexity). 2 stretches are compositionally biased toward polar residues: residues 95–110 (LLSE…STSV) and 120–133 (VQAS…QPSE). The AN1-type zinc finger occupies 143-189 (KQKKNRCFMCRKKVGLTGFECRCGNVYCGVHRYSDVHNCSYNYKADA). Zn(2+)-binding residues include C149, C152, C163, C165, C170, H173, H179, and C181. K204 carries the post-translational modification N6-acetyllysine.

In terms of assembly, interacts with PKN1. Interacts with TRAF2. Interacts with mono- and polyubiquitin. Interacts with PEX6. Interacts with PEX5 (Cys-linked ubiquitinated). As to expression, widely expressed with high level in heart, skeletal muscle, liver, kidney and placenta.

The protein localises to the cytoplasm. Involved in regulation of TNF-alpha induced NF-kappa-B activation and apoptosis. Involved in modulation of 'Lys-48'-linked polyubiquitination status of TRAF2 and decreases association of TRAF2 with RIPK1. Required for PTS1 target sequence-dependent protein import into peroxisomes and PEX5 stability; may cooperate with PEX6. In vitro involved in PEX5 export from the cytosol to peroxisomes. This Homo sapiens (Human) protein is AN1-type zinc finger protein 6 (ZFAND6).